A 304-amino-acid chain; its full sequence is tRNA dimethylallyltransferase (304 aa).

13–20 (GPTAAGKT) is a binding site for ATP. Residue 15 to 20 (TAAGKT) participates in substrate binding. Positions 38–41 (DSRQ) are interaction with substrate tRNA.

The protein belongs to the IPP transferase family. In terms of assembly, monomer. It depends on Mg(2+) as a cofactor.

It catalyses the reaction adenosine(37) in tRNA + dimethylallyl diphosphate = N(6)-dimethylallyladenosine(37) in tRNA + diphosphate. Functionally, catalyzes the transfer of a dimethylallyl group onto the adenine at position 37 in tRNAs that read codons beginning with uridine, leading to the formation of N6-(dimethylallyl)adenosine (i(6)A). The protein is tRNA dimethylallyltransferase of Cytophaga hutchinsonii (strain ATCC 33406 / DSM 1761 / CIP 103989 / NBRC 15051 / NCIMB 9469 / D465).